A 631-amino-acid polypeptide reads, in one-letter code: ATP-dependent zinc metalloprotease FtsH (631 aa).

Over 1-5 (MKKSN) the chain is Cytoplasmic. A helical transmembrane segment spans residues 6-26 (PWFVFFWITLLVIVLMFINFA). The Periplasmic portion of the chain corresponds to 27–102 (RQGGNEVELE…LEFSATEKSG (76 aa)). A helical transmembrane segment spans residues 103–123 (WLGSLLLNWGPVVLLILFCFW). The Cytoplasmic segment spans residues 124–631 (MMRGMSMGNK…KVINEKVIIS (508 aa)). 196 to 203 (GSPGTGKT) provides a ligand contact to ATP. Zn(2+) is bound at residue His-418. Glu-419 is an active-site residue. 2 residues coordinate Zn(2+): His-422 and Asp-494.

This sequence in the central section; belongs to the AAA ATPase family. The protein in the C-terminal section; belongs to the peptidase M41 family. Homohexamer. Zn(2+) is required as a cofactor.

The protein localises to the cell inner membrane. Acts as a processive, ATP-dependent zinc metallopeptidase for both cytoplasmic and membrane proteins. Plays a role in the quality control of integral membrane proteins. This Endomicrobium trichonymphae protein is ATP-dependent zinc metalloprotease FtsH.